A 214-amino-acid chain; its full sequence is Holliday junction branch migration complex subunit RuvA (214 aa).

The tract at residues 1 to 64 (MITRIRGEML…EDAMTLYGFT (64 aa)) is domain I. A domain II region spans residues 65-143 (SGEQLAVFEL…DITSKDAYQD (79 aa)). Positions 144–160 (ISASEKLDNTGEKLGIS) are flexible linker. Positions 161-214 (TRHKHLDELKAALSSLGYTNREIEKTVDAIQGQITEGQDMEELLRLALQKLNTK) are domain III.

This sequence belongs to the RuvA family. As to quaternary structure, homotetramer. Forms an RuvA(8)-RuvB(12)-Holliday junction (HJ) complex. HJ DNA is sandwiched between 2 RuvA tetramers; dsDNA enters through RuvA and exits via RuvB. An RuvB hexamer assembles on each DNA strand where it exits the tetramer. Each RuvB hexamer is contacted by two RuvA subunits (via domain III) on 2 adjacent RuvB subunits; this complex drives branch migration. In the full resolvosome a probable DNA-RuvA(4)-RuvB(12)-RuvC(2) complex forms which resolves the HJ.

The protein localises to the cytoplasm. Functionally, the RuvA-RuvB-RuvC complex processes Holliday junction (HJ) DNA during genetic recombination and DNA repair, while the RuvA-RuvB complex plays an important role in the rescue of blocked DNA replication forks via replication fork reversal (RFR). RuvA specifically binds to HJ cruciform DNA, conferring on it an open structure. The RuvB hexamer acts as an ATP-dependent pump, pulling dsDNA into and through the RuvAB complex. HJ branch migration allows RuvC to scan DNA until it finds its consensus sequence, where it cleaves and resolves the cruciform DNA. This chain is Holliday junction branch migration complex subunit RuvA, found in Natranaerobius thermophilus (strain ATCC BAA-1301 / DSM 18059 / JW/NM-WN-LF).